Consider the following 267-residue polypeptide: Interleukin-2 receptor subunit alpha (267 aa).

The N-terminal stretch at 1 to 21 is a signal peptide; it reads MEPHLLMLGFLSFTIVPGCWA. A Sushi 1 domain is found at 22-79; sequence ELCLYDPPEVPNATFKALSYKNGTILNCECKRGFRRLNELVYMACLGNSWSNNCQCTS. The Extracellular segment spans residues 22-235; the sequence is ELCLYDPPEV…ETFVFTKEYQ (214 aa). 3 disulfide bridges follow: cysteine 24–cysteine 66, cysteine 49–cysteine 75, and cysteine 51–cysteine 77. Asparagine 33 and asparagine 43 each carry an N-linked (GlcNAc...) asparagine glycan. Over residues 82–93 the composition is skewed to polar residues; it reads HDNSREQVTPQP. Residues 82-108 form a disordered region; sequence HDNSREQVTPQPEGQKEQQTTDTQKST. Residues 98–108 show a composition bias toward low complexity; the sequence is EQQTTDTQKST. Positions 118–181 constitute a Sushi 2 domain; sequence GHCREPPPWR…WTHPQLTCVD (64 aa). 2 disulfide bridges follow: cysteine 120-cysteine 163 and cysteine 147-cysteine 179. Residues 191–215 are disordered; that stretch reads SEESQGSRNSFPESEASCPTPNTDF. A compositionally biased stretch (polar residues) spans 192-215; sequence EESQGSRNSFPESEASCPTPNTDF. A helical membrane pass occupies residues 236–256; the sequence is VAVASCIFLLLSILLLSGFTW. The Cytoplasmic portion of the chain corresponds to 257 to 267; it reads QHRWRKSRRTI.

As to quaternary structure, non-covalent dimer of an alpha and a beta subunit. IL2R exists in 3 different forms: a high affinity dimer, an intermediate affinity monomer (beta subunit), and a low affinity monomer (alpha subunit). The high and intermediate affinity forms also associate with a gamma subunit.

Its subcellular location is the membrane. Its function is as follows. Receptor for interleukin-2. The receptor is involved in the regulation of immune tolerance by controlling regulatory T cells (TREGs) activity. TREGs suppress the activation and expansion of autoreactive T-cells. The chain is Interleukin-2 receptor subunit alpha (Il2ra) from Rattus norvegicus (Rat).